Consider the following 310-residue polypeptide: Porphobilinogen deaminase (310 aa).

Cysteine 242 bears the S-(dipyrrolylmethanemethyl)cysteine mark.

Belongs to the HMBS family. In terms of assembly, monomer. It depends on dipyrromethane as a cofactor.

It carries out the reaction 4 porphobilinogen + H2O = hydroxymethylbilane + 4 NH4(+). It participates in porphyrin-containing compound metabolism; protoporphyrin-IX biosynthesis; coproporphyrinogen-III from 5-aminolevulinate: step 2/4. In terms of biological role, tetrapolymerization of the monopyrrole PBG into the hydroxymethylbilane pre-uroporphyrinogen in several discrete steps. The chain is Porphobilinogen deaminase from Psychromonas ingrahamii (strain DSM 17664 / CCUG 51855 / 37).